We begin with the raw amino-acid sequence, 441 residues long: MTVSSGDPDVHASRSAQLFERADLVIPGGVNSPVRAFHSVGGTPRFIKEASGYTLTDVDGNDYVDLICSWGPMILGHAHPAVVEAVQKAAATGLSFGAPTEGEIELAEEIVGRVAPVEKVRLVNSGTEATMSAVRLARGFTGRTKVLKFSGCYHGHVDALLADAGSGLATFGLPTSPGVTGAQAEDTIVVPYNDLDAVAQAFAANEGRIACVITEAAAGNMGAVAPQPGFNEGLRKLTSDNGALLIMDEVMTGFRVSSAGWFGLDGVAGDLYTFGKVMSGGLPAAAFGGRADVMAHLAPAGPVYQAGTLSGNPVAVAAGLASLRAADQGVYDALERNSATLRTLLSDALTAESVPHRVQTAGTMLSVFFSEDPVTNYAEAKAAQTWRFPAFFHGLLSRGVYPPPSAFEAWFVSAAMDDRAFSIIADALPHAAKAAAAAVQP.

The residue at position 276 (Lys-276) is an N6-(pyridoxal phosphate)lysine.

This sequence belongs to the class-III pyridoxal-phosphate-dependent aminotransferase family. HemL subfamily. Homodimer. Pyridoxal 5'-phosphate is required as a cofactor.

Its subcellular location is the cytoplasm. The catalysed reaction is (S)-4-amino-5-oxopentanoate = 5-aminolevulinate. It participates in porphyrin-containing compound metabolism; protoporphyrin-IX biosynthesis; 5-aminolevulinate from L-glutamyl-tRNA(Glu): step 2/2. This is Glutamate-1-semialdehyde 2,1-aminomutase from Rhodococcus jostii (strain RHA1).